The following is a 118-amino-acid chain: MRAKDALGRFGEDVAARHLAAVGAEILDRNWRCREGELDLVVQDGESLVFCEVKTRSGTRYGSAAEAVVGRKAARIRRLAARWLAEHPHASSLVRFDVLLVSRPSTGPVRVEHIRGAF.

It belongs to the UPF0102 family.

This chain is UPF0102 protein Francci3_3586, found in Frankia casuarinae (strain DSM 45818 / CECT 9043 / HFP020203 / CcI3).